The primary structure comprises 327 residues: MSQRQLAYVFDLNKCIGCHTCTMACKQLWTNRDGREYMYWNNVESRPGKGYPKNWEQKGGGFDKDGKLKTNGIIPIRADYGGTWNYNLLETLVEGKSNQVVPDEKPTWGPNWDEDEGKGEFPNNHYFYLPRICNHCSNPACLAACPTKAIYKREEDGLVVVDQSRCKGYRYCVKACPYGKMYFNLQKGTSEKCIGCYPRVEKGEAPACVKQCSGRIRFWGYRDDKDGPIYKLVDQWKVALPLHAEYGTEPNVFYVPPMNTTPPPFEEDGRLGDKPRIPIEDLEALFGPGVKQALATLGGEMAKRRKAQASELTDILIGYTNKDRYGI.

3 4Fe-4S ferredoxin-type domains span residues 6–35 (LAYV…RDGR), 124–155 (NHYF…KREE), and 157–186 (GLVV…FNLQ). [4Fe-4S] cluster contacts are provided by cysteine 15, cysteine 18, cysteine 21, cysteine 25, cysteine 133, cysteine 136, and cysteine 141. Cysteine 145, cysteine 166, and cysteine 172 together coordinate [3Fe-4S] cluster. Positions 176, 193, 196, 208, and 212 each coordinate [4Fe-4S] cluster.

In terms of assembly, heterotrimer of alpha (SerA), beta (SerB) and gamma (SerC) subunits. The cofactor is [3Fe-4S] cluster. [4Fe-4S] cluster is required as a cofactor.

It is found in the periplasm. The enzyme catalyses selenite + 2 Fe(III)-[cytochrome c] + H2O = 2 Fe(II)-[cytochrome] + selenate + 2 H(+). With respect to regulation, enzyme isolated from cells grown in a tungstate rich environment shows a 20-fold reduction in selenate reductase activity. In terms of biological role, component of the selenate reductase, which catalyzes the reduction of selenate to selenite and allows anaerobic growth with selenate as the sole terminal electron acceptor. A c-type di-heme cytochrome of the cytc4 family was shown to donate electrons to the selenate reductase in vitro. SerABC can also use reduced benzyl viologen or reduced methyl viologen as an electron donor. This subunit transfers electrons from SerC to SerA. The reductase is specific for selenate, and cannot reduce nitrate, nitrite, chlorate or sulfate. This Thauera selenatis protein is Selenate reductase subunit beta.